Here is a 63-residue protein sequence, read N- to C-terminus: Large ribosomal subunit protein uL29 (63 aa).

The protein belongs to the universal ribosomal protein uL29 family.

This chain is Large ribosomal subunit protein uL29, found in Aeromonas salmonicida (strain A449).